Reading from the N-terminus, the 223-residue chain is Small ribosomal subunit protein uS5 (223 aa).

The span at 1-15 (MTEAVAAEATETAPA) shows a compositional bias: low complexity. The tract at residues 1–51 (MTEAVAAEATETAPATDDRRGGRRGERGDRGQGRGDRGGRGGRDGGREAEK) is disordered. Basic and acidic residues predominate over residues 16–51 (TDDRRGGRRGERGDRGQGRGDRGGRGGRDGGREAEK). In terms of domain architecture, S5 DRBM spans 54–117 (FVERVVTINR…EEAKKSFFRV (64 aa)).

Belongs to the universal ribosomal protein uS5 family. Part of the 30S ribosomal subunit. Contacts proteins S4 and S8.

Its function is as follows. With S4 and S12 plays an important role in translational accuracy. Located at the back of the 30S subunit body where it stabilizes the conformation of the head with respect to the body. The sequence is that of Small ribosomal subunit protein uS5 from Paenarthrobacter aurescens (strain TC1).